The following is a 297-amino-acid chain: N-acetylmuramic acid 6-phosphate etherase (297 aa).

The SIS domain occupies 56 to 219 (AIEAFNKGGR…STISMIGIGK (164 aa)). Residue glutamate 84 is the Proton donor of the active site. Glutamate 115 is an active-site residue.

Belongs to the GCKR-like family. MurNAc-6-P etherase subfamily. As to quaternary structure, homodimer.

The enzyme catalyses N-acetyl-D-muramate 6-phosphate + H2O = N-acetyl-D-glucosamine 6-phosphate + (R)-lactate. It participates in amino-sugar metabolism; N-acetylmuramate degradation. In terms of biological role, specifically catalyzes the cleavage of the D-lactyl ether substituent of MurNAc 6-phosphate, producing GlcNAc 6-phosphate and D-lactate. The chain is N-acetylmuramic acid 6-phosphate etherase from Lactococcus lactis subsp. lactis (strain IL1403) (Streptococcus lactis).